The primary structure comprises 407 residues: M protein, serotype 2.1 (407 aa).

The N-terminal stretch at 1–41 (MARKDTNKQYSLRKLKTGTASVAVAVAVLGAGFANQTTVKA) is a signal peptide. A 2 X 7 AA tandem repeats region spans residues 81 to 94 (VEEEHKKVEEEHKK). Basic and acidic residues-rich tracts occupy residues 83 to 144 (EEHK…KRYQ), 152 to 229 (QLEK…EKQI), 237 to 264 (LSRD…EKQI), and 272 to 288 (LSRD…KVEA). The segment at 83-289 (EEHKKVEEEH…REAKKKVEAD (207 aa)) is disordered. 4 C repeats span residues 151-185 (QQLE…EAEH), 186-220 (QKLK…EAEH), 221-255 (QKLK…EAEH), and 256-290 (QKLK…EADL). 4 D repeats span residues 323–328 (AKLEAE), 329–334 (AKALKE), 337–342 (AKQAEE), and 344–349 (AKLKGN). A disordered region spans residues 344 to 382 (AKLKGNQTPNAKVAPQANRSRSAMTQQKRTLPSTGETAN). Residues 360 to 380 (ANRSRSAMTQQKRTLPSTGET) are compositionally biased toward polar residues. The short motif at 374–378 (LPSTG) is the LPXTG sorting signal element. Pentaglycyl murein peptidoglycan amidated threonine is present on threonine 377. Positions 378–407 (GETANPFFTAAAATVMVSAGMLALKRKEEN) are cleaved as a propeptide — removed by sortase.

It belongs to the M protein family.

Its subcellular location is the secreted. The protein localises to the cell wall. Functionally, this protein is one of the different antigenic serotypes of protein M. Protein M is closely associated with virulence of the bacterium and can render the organism resistant to phagocytosis. The protein is M protein, serotype 2.1 (emmL2.1) of Streptococcus pyogenes.